Reading from the N-terminus, the 349-residue chain is Short chain dehydrogenase/reductase dpfgH (349 aa).

The helical transmembrane segment at 9 to 31 threads the bilayer; sequence LCIRVVDSLYGSFLYLPLAILFL. Residues I65, R89, and D115 each contribute to the NADP(+) site. Residue N118 is glycosylated (N-linked (GlcNAc...) asparagine). Positions 142 and 164 each coordinate NADP(+). Active-site proton donor residues include S191 and S192. Y223 and K227 together coordinate NADP(+). Residue Y223 is the Proton acceptor of the active site. K227 functions as the Lowers pKa of active site Tyr in the catalytic mechanism. The N-linked (GlcNAc...) asparagine glycan is linked to N334.

It belongs to the short-chain dehydrogenases/reductases (SDR) family.

It localises to the membrane. The protein operates within secondary metabolite biosynthesis; terpenoid biosynthesis. Its function is as follows. Short chain dehydrogenase/reductase; part of the gene cluster that mediates the biosynthesis of diterpenoid pyrones. The first step of the pathway is the synthesis of the alpha-pyrone moiety by the polyketide synthase dpfgA via condensation of one acetyl-CoA starter unit with 3 malonyl-CoA units and 2 methylations. The alpha-pyrone is then combined with geranylgeranyl pyrophosphate (GGPP) formed by the GGPP synthase dpfgD through the action of the prenyltransferase dpfgC to yield a linear alpha-pyrone diterpenoid. Subsequent steps in the diterpenoid pyrone biosynthetic pathway involve the decalin core formation, which is initiated by the epoxidation of the C10-C11 olefin by the FAD-dependent oxidoreductase dpfgE, and is followed by a cyclization cascade catalyzed by the terpene cyclase dpfgB. The short chain dehydrogenase/reductase dpfgG then oxidizes the 8S hydroxy group to a ketone and the short chain dehydrogenase/reductase dpfgH reduces the ketone to the 8R hydroxy group to yield higginsianin B. Higginsianin B is further methylated by the methyltransferase dpfgI to produce the intermediate named FDDP B. The cytochrome P450 monooxygenase dfgpJ then catalyzes a three-step oxidation at C-27 to generate a carboxylic acid as well as C-26 hydroxylation. Finally, methyltransferase dpfgK methylates the carboxylic acid generated by dpfgJ, yielding the final diterpenoid pyrones from the pathway which were named FDDP D and FDDP E. The chain is Short chain dehydrogenase/reductase dpfgH from Gibberella zeae (strain ATCC MYA-4620 / CBS 123657 / FGSC 9075 / NRRL 31084 / PH-1) (Wheat head blight fungus).